Here is a 269-residue protein sequence, read N- to C-terminus: Putative esterase/lipase 1 (269 aa).

Histidine 27 is a catalytic residue. Residue serine 94 is the Charge relay system of the active site.

It belongs to the lipase/esterase LIP3/BchO family.

This chain is Putative esterase/lipase 1, found in Mycoplasma pneumoniae (strain ATCC 29342 / M129 / Subtype 1) (Mycoplasmoides pneumoniae).